A 420-amino-acid chain; its full sequence is Glucose-1-phosphate adenylyltransferase (420 aa).

Alpha-D-glucose 1-phosphate-binding positions include tyrosine 107, glycine 172, 187-188, and serine 205; that span reads EK.

The protein belongs to the bacterial/plant glucose-1-phosphate adenylyltransferase family. As to quaternary structure, homotetramer.

It catalyses the reaction alpha-D-glucose 1-phosphate + ATP + H(+) = ADP-alpha-D-glucose + diphosphate. It participates in glycan biosynthesis; glycogen biosynthesis. In terms of biological role, involved in the biosynthesis of ADP-glucose, a building block required for the elongation reactions to produce glycogen. Catalyzes the reaction between ATP and alpha-D-glucose 1-phosphate (G1P) to produce pyrophosphate and ADP-Glc. This Rhodopseudomonas palustris (strain HaA2) protein is Glucose-1-phosphate adenylyltransferase.